A 404-amino-acid polypeptide reads, in one-letter code: MMTYEYILVRYGEMTTKGKNRSKFVSTLKDNVKFKLKKFPNIKIDATHDRMYIQLNGEDHEAVSERLKDVFGIHKFNLAMKVPSELEDIKKGALAAFLQVKGDVKTFKITVHRSYKHFPMRTMELLPEIGGHILENTEDITVDVHNPDVNVRVEIRSGYSYIMCDERMGAGGLPVGVGGKVMVLLSGGIDSPVAAYLTMKRGVSVEAVHFHSPPFTSERAKQKVIDLAQELTKYCKRVTLHLVPFTEVQKTINKEIPSSYSMTVMRRMMMRITERIAEERNALAITTGESLGQVASQTLDSMHTINEVTNYPVIRPLITMDKLEIIKIAEEIGTYDISIRPYEDCCTVFTPASPATKPKREKANRFEAKYDFTPLIDEAVANKETMVLQTVEVVAEEEKFEELF.

The THUMP domain maps to 61–166; sequence EAVSERLKDV…SGYSYIMCDE (106 aa). ATP-binding positions include 184-185, 209-210, R266, G288, and Q297; these read LL and HF.

It belongs to the ThiI family.

The protein localises to the cytoplasm. It carries out the reaction [ThiI sulfur-carrier protein]-S-sulfanyl-L-cysteine + a uridine in tRNA + 2 reduced [2Fe-2S]-[ferredoxin] + ATP + H(+) = [ThiI sulfur-carrier protein]-L-cysteine + a 4-thiouridine in tRNA + 2 oxidized [2Fe-2S]-[ferredoxin] + AMP + diphosphate. The catalysed reaction is [ThiS sulfur-carrier protein]-C-terminal Gly-Gly-AMP + S-sulfanyl-L-cysteinyl-[cysteine desulfurase] + AH2 = [ThiS sulfur-carrier protein]-C-terminal-Gly-aminoethanethioate + L-cysteinyl-[cysteine desulfurase] + A + AMP + 2 H(+). Its pathway is cofactor biosynthesis; thiamine diphosphate biosynthesis. Catalyzes the ATP-dependent transfer of a sulfur to tRNA to produce 4-thiouridine in position 8 of tRNAs, which functions as a near-UV photosensor. Also catalyzes the transfer of sulfur to the sulfur carrier protein ThiS, forming ThiS-thiocarboxylate. This is a step in the synthesis of thiazole, in the thiamine biosynthesis pathway. The sulfur is donated as persulfide by IscS. The protein is Probable tRNA sulfurtransferase of Bacillus cereus (strain AH820).